We begin with the raw amino-acid sequence, 253 residues long: Complement C1q subcomponent subunit B (253 aa).

A signal peptide spans 1-25 (MKTQWSEILTPLLLLLLGLLHVSWA). Residue Q26 is modified to Pyrrolidone carboxylic acid. In terms of domain architecture, Collagen-like spans 29–112 (CTGSPGIPGV…GPRGPKGGSG (84 aa)). The disordered stretch occupies residues 29 to 114 (CTGSPGIPGV…RGPKGGSGDY (86 aa)). 5 positions are modified to 4-hydroxyproline: P33, P36, P39, P51, and P54. 5-hydroxylysine occurs at positions 57 and 60. P63 carries the 4-hydroxyproline modification. Basic and acidic residues predominate over residues 68–77 (DHGELGEKGD). 5-hydroxylysine is present on K75. The segment covering 78-96 (AGIPGIPGKVGPKGPVGPK) has biased composition (low complexity). 2 positions are modified to 4-hydroxyproline: P81 and P84. Residues K90 and K96 each carry the 5-hydroxylysine modification. 4-hydroxyproline is present on residues P99 and P102. K108 is modified (5-hydroxylysine). A C1q domain is found at 115-253 (KATQKVAFSA…GFLLFPDMDV (139 aa)). A disulfide bridge links C179 with C198. 3 residues coordinate Ca(2+): D199, Y200, and Q206.

In terms of assembly, core component of the complement C1 complex, a calcium-dependent complex composed of 1 molecule of the C1Q subcomplex, 2 molecules of C1R and 2 molecules of C1S. The C1Q subcomplex is composed 18 subunits: 3 chains of C1QA, C1QB, and C1QC trimerize to form 6 collagen-like triple helices connected to six globular ligand-recognition modules (C1q domain). In terms of processing, hydroxylated on lysine and proline residues. Hydroxylated lysine residues can be glycosylated. Human C1Q contains up to 68.3 hydroxylysine-galactosylglucose residues and up to 2.5 hydroxylysine-galactose per molecule. Total percentage hydroxylysine residues glycosylated is 86.4%. Highest levels in spleen, lung and brain. Weaker expression in kidney and liver. In the spleen, localized mainly to the red pulp, in cells mainly of monocyte-macrophage lineage. In white pulp, localized in specific dendritic cells such as those from the periarteriolar lymphatic sheath (PALS).

The protein localises to the secreted. It is found in the cell surface. The C1Q subcomplex is inhibited by sulfated molecules, such as triterpenoid sulfates, heparan sulfate, or chondroitin sulfates. Functionally, core component of the complement C1 complex, a multiprotein complex that initiates the classical pathway of the complement system, a cascade of proteins that leads to phagocytosis and breakdown of pathogens and signaling that strengthens the adaptive immune system. The classical complement pathway is initiated by the C1Q subcomplex of the C1 complex, which specifically binds IgG or IgM immunoglobulins complexed with antigens, forming antigen-antibody complexes on the surface of pathogens: C1QA, together with C1QB and C1QC, specifically recognizes and binds the Fc regions of IgG or IgM via its C1q domain. Immunoglobulin-binding activates the proenzyme C1R, which cleaves C1S, initiating the proteolytic cascade of the complement system. The C1Q subcomplex is activated by a hexamer of IgG complexed with antigens, while it is activated by a pentameric IgM. The C1Q subcomplex also recognizes and binds phosphatidylserine exposed on the surface of cells undergoing programmed cell death, possibly promoting activation of the complement system. The chain is Complement C1q subcomponent subunit B from Rattus norvegicus (Rat).